Reading from the N-terminus, the 921-residue chain is Probable serine/threonine-protein kinase DDB_G0275165 (921 aa).

The 255-residue stretch at Phe-23 to Ile-277 folds into the Protein kinase domain. ATP is bound by residues Ile-29 to Val-37 and Lys-50. Asp-147 acts as the Proton acceptor in catalysis. Disordered regions lie at residues Asp-289–Arg-453, Arg-465–Asp-492, Arg-530–Asn-571, Asn-583–Ile-653, Ser-671–Asn-698, Ile-737–Leu-813, Ser-833–Phe-858, and Phe-877–Lys-921. Composition is skewed to low complexity over residues Asn-310–Asn-352, Ser-400–Asn-412, and Asn-429–Asn-445. Composition is skewed to low complexity over residues Asn-539 to Lys-550 and Asn-583 to Ser-638. Over residues Pro-643–Ile-653 the composition is skewed to polar residues. Low complexity-rich tracts occupy residues Thr-748–Thr-775, Gln-842–Gln-857, and Thr-892–Pro-910.

The protein belongs to the protein kinase superfamily. TKL Ser/Thr protein kinase family.

The catalysed reaction is L-seryl-[protein] + ATP = O-phospho-L-seryl-[protein] + ADP + H(+). It catalyses the reaction L-threonyl-[protein] + ATP = O-phospho-L-threonyl-[protein] + ADP + H(+). This chain is Probable serine/threonine-protein kinase DDB_G0275165, found in Dictyostelium discoideum (Social amoeba).